A 166-amino-acid polypeptide reads, in one-letter code: Bile acid 7alpha-dehydratase (166 aa).

As to quaternary structure, homodimer.

It catalyses the reaction 7alpha,12alpha-dihydroxy-3-oxochol-4-en-24-oyl-CoA = 12alpha-hydroxy-3-oxochola-4,6-dien-24-oyl-CoA + H2O. It carries out the reaction 7alpha-hydroxy-3-oxochol-4-en-24-oyl-CoA = 3-oxochol-4,6-dien-24-oyl-CoA + H2O. The enzyme catalyses 7alpha,12alpha-dihydroxy-3-oxochol-4-en-24-oate = 12alpha-hydroxy-3-oxochola-4,6-dien-24-oate + H2O. The catalysed reaction is 7alpha-hydroxy-3-oxochol-4-en-24-oate = 3-oxochola-4,6-dien-24-oate + H2O. The protein operates within lipid metabolism; bile acid biosynthesis. Functions in the bile acid 7alpha-dehydroxylation pathway, which forms secondary bile acids via the 7alpha-dehydroxylation of primary bile acids, and is carried out by intestinal anaerobic bacteria. Catalyzes the dehydration step in this pathway, yielding a 3-oxo-Delta(4,6)-bile acid-CoA intermediate. In vitro, can act on the free bile acids (non CoA-conjugated) 7-alpha,12-alpha-dihydroxy-3-oxochol-4-enoate and 7-alpha-hydroxy-3-oxochol-4-enoate, but not on 7-alpha,12-alpha-dihydroxy-3-oxo-5-beta-cholanate, 3-alpha,7-alpha,12-alpha-trihydroxy-5-beta-cholanate or 7-beta-hydroxy-3-oxochol-4-enoate. The protein is Bile acid 7alpha-dehydratase of Clostridium scindens (strain JCM 10418 / VPI 12708).